Here is a 151-residue protein sequence, read N- to C-terminus: Putative pre-16S rRNA nuclease (151 aa).

This sequence belongs to the YqgF nuclease family.

Its subcellular location is the cytoplasm. Its function is as follows. Could be a nuclease involved in processing of the 5'-end of pre-16S rRNA. This is Putative pre-16S rRNA nuclease from Neisseria meningitidis serogroup B (strain ATCC BAA-335 / MC58).